We begin with the raw amino-acid sequence, 421 residues long: tRNA (guanine-N(7)-)-methyltransferase non-catalytic subunit TRM82 (421 aa).

WD repeat units follow at residues 72-112, 170-212, and 216-258; these read AVYS…EDPE, GHVS…IVDK, and GHKE…SQYS.

This sequence belongs to the WD repeat TRM82 family. As to quaternary structure, forms a heterodimer with the catalytic subunit TRM8.

It localises to the nucleus. It functions in the pathway tRNA modification; N(7)-methylguanine-tRNA biosynthesis. In terms of biological role, required for the formation of N(7)-methylguanine at position 46 (m7G46) in tRNA. In the complex, it is required to stabilize and induce conformational changes of the catalytic subunit. The protein is tRNA (guanine-N(7)-)-methyltransferase non-catalytic subunit TRM82 of Candida glabrata (strain ATCC 2001 / BCRC 20586 / JCM 3761 / NBRC 0622 / NRRL Y-65 / CBS 138) (Yeast).